Here is a 574-residue protein sequence, read N- to C-terminus: Glycine--tRNA ligase (574 aa).

Residues Arg-96 and Glu-162 each coordinate substrate. ATP is bound by residues 194-196 (RNE), 204-209 (IRLREF), 327-328 (EC), and 450-453 (GIDR). 209–213 (FTQAE) provides a ligand contact to substrate. 446 to 450 (EPSYG) contributes to the substrate binding site.

This sequence belongs to the class-II aminoacyl-tRNA synthetase family.

It localises to the cytoplasm. It carries out the reaction tRNA(Gly) + glycine + ATP = glycyl-tRNA(Gly) + AMP + diphosphate. Functionally, catalyzes the attachment of glycine to tRNA(Gly). The chain is Glycine--tRNA ligase from Methanococcus vannielii (strain ATCC 35089 / DSM 1224 / JCM 13029 / OCM 148 / SB).